The following is a 94-amino-acid chain: RNA-binding protein Hfq (94 aa).

The region spanning 9 to 68 (DPFLNALRRERVPVSIYLVNGIKLQGQVESFDQFVILLKNTVSQMVYKHAISTVVPARPF) is the Sm domain. Residues 70–94 (VSAHHSSPAPTPAGGFNGQNDETSE) are disordered.

It belongs to the Hfq family. In terms of assembly, homohexamer.

RNA chaperone that binds small regulatory RNA (sRNAs) and mRNAs to facilitate mRNA translational regulation in response to envelope stress, environmental stress and changes in metabolite concentrations. Also binds with high specificity to tRNAs. This is RNA-binding protein Hfq from Shewanella woodyi (strain ATCC 51908 / MS32).